Consider the following 346-residue polypeptide: uncharacterized protein (346 aa).

This is an uncharacterized protein from Mycoplasma genitalium (strain ATCC 33530 / DSM 19775 / NCTC 10195 / G37) (Mycoplasmoides genitalium).